Consider the following 330-residue polypeptide: Complement factor H-related protein 1 (330 aa).

Positions 1–18 are cleaved as a signal peptide; that stretch reads MWLLVSVILISRISSVGG. Sushi domains follow at residues 22-84, 85-142, 145-203, 206-264, and 273-329; these read FCDF…PKCL, RLCF…KCRS, TSCV…QCKD, GKCG…KCLH, and MENY…TCAK. Disulfide bonds link cysteine 23/cysteine 72, cysteine 55/cysteine 83, cysteine 87/cysteine 129, cysteine 114/cysteine 140, cysteine 147/cysteine 190, cysteine 176/cysteine 201, cysteine 208/cysteine 251, cysteine 237/cysteine 262, cysteine 266/cysteine 317, and cysteine 300/cysteine 327. N-linked (GlcNAc...) asparagine glycosylation is present at asparagine 126. Asparagine 194 carries N-linked (GlcNAc...) asparagine glycosylation.

As to quaternary structure, head-to-tail homodimer and heterodimer with CFHR2 or CFHR5. In terms of assembly, (Microbial infection) Interacts with C.albicans GPD2; the interaction is direct and leads to the degradation of C3. In terms of processing, N-glycosylated. Two forms are observed; one with a single side chain and the other with two. As to expression, expressed by the liver and secreted in plasma.

It localises to the secreted. Its function is as follows. Involved in complement regulation. The dimerized forms have avidity for tissue-bound complement fragments and efficiently compete with the physiological complement inhibitor CFH. Can associate with lipoproteins and may play a role in lipid metabolism. In Homo sapiens (Human), this protein is Complement factor H-related protein 1 (CFHR1).